A 73-amino-acid polypeptide reads, in one-letter code: Translation initiation factor IF-1 (73 aa).

The 72-residue stretch at 1-72 (MAKDEIIEFE…SKGRITYRGK (72 aa)) folds into the S1-like domain.

It belongs to the IF-1 family. Component of the 30S ribosomal translation pre-initiation complex which assembles on the 30S ribosome in the order IF-2 and IF-3, IF-1 and N-formylmethionyl-tRNA(fMet); mRNA recruitment can occur at any time during PIC assembly.

It is found in the cytoplasm. One of the essential components for the initiation of protein synthesis. Stabilizes the binding of IF-2 and IF-3 on the 30S subunit to which N-formylmethionyl-tRNA(fMet) subsequently binds. Helps modulate mRNA selection, yielding the 30S pre-initiation complex (PIC). Upon addition of the 50S ribosomal subunit IF-1, IF-2 and IF-3 are released leaving the mature 70S translation initiation complex. This Psychrobacter arcticus (strain DSM 17307 / VKM B-2377 / 273-4) protein is Translation initiation factor IF-1.